Reading from the N-terminus, the 176-residue chain is ATP-dependent protease subunit HslV (176 aa).

Thr-5 is a catalytic residue. Positions 161, 164, and 167 each coordinate Na(+).

This sequence belongs to the peptidase T1B family. HslV subfamily. In terms of assembly, a double ring-shaped homohexamer of HslV is capped on each side by a ring-shaped HslU homohexamer. The assembly of the HslU/HslV complex is dependent on binding of ATP.

Its subcellular location is the cytoplasm. The enzyme catalyses ATP-dependent cleavage of peptide bonds with broad specificity.. Allosterically activated by HslU binding. Its function is as follows. Protease subunit of a proteasome-like degradation complex believed to be a general protein degrading machinery. The chain is ATP-dependent protease subunit HslV from Desulfitobacterium hafniense (strain DSM 10664 / DCB-2).